We begin with the raw amino-acid sequence, 797 residues long: Glycoprotein gp2 (797 aa).

Positions Met1–Thr25 are cleaved as a signal peptide. Disordered stretches follow at residues Thr24–Ala188 and Ala212–Pro549. Positions Ala212–Thr373 are enriched in low complexity. The segment covering Ala374–Phe394 has biased composition (polar residues). Low complexity-rich tracts occupy residues Thr395–Thr430 and Thr445–Pro457. Residues Phe466–Ala492 show a composition bias toward polar residues. A compositionally biased stretch (basic residues) spans His495–Gly505. Residue Asn590 is glycosylated (N-linked (GlcNAc...) asparagine; by host). The helical transmembrane segment at Phe766–Thr790 threads the bilayer.

Its subcellular location is the virion membrane. In terms of biological role, virulence factor. The chain is Glycoprotein gp2 (EUs4) from Equine herpesvirus 1 (strain Ab4p) (EHV-1).